The sequence spans 333 residues: Squamosa promoter-binding-like protein 8 (333 aa).

The interval 1 to 28 (MLDYEWDNPSSIVLSGDERNPDSDPTRS) is disordered. Residues 16-25 (GDERNPDSDP) are compositionally biased toward basic and acidic residues. A sufficient and necessary for DNA binding region spans residues 179–269 (MANSLSTPRC…RKCHQSASAT (91 aa)). The segment at 185 to 262 (TPRCQAEGCN…ADHNRRRRKC (78 aa)) adopts an SBP-type zinc-finger fold. Zn(2+) is bound by residues cysteine 188, cysteine 193, cysteine 210, histidine 213, cysteine 229, cysteine 232, histidine 236, and cysteine 248. Positions 245-261 (KRSCRKRLADHNRRRRK) match the Bipartite nuclear localization signal motif. 2 disordered regions span residues 254–303 (DHNR…TISL) and 314–333 (TASS…FSSG). Residues 264–284 (QSASATQDTGTGKTTPKSPND) show a composition bias toward polar residues. Residues 289–299 (ASSSPSSNAPP) show a composition bias toward low complexity.

Zn(2+) is required as a cofactor. Expressed in shoot apical region and early floral tissues. Transcripts levels increase in developing pollen sacs, and decrease in later stage of anther development. Strongly expressed in the placental region of the carpels.

It localises to the nucleus. The protein localises to the cytoplasm. Functionally, trans-acting factor that binds specifically to the consensus nucleotide sequence 5'-TNCGTACAA-3'. Binds specifically to the 5'-GTAC-3' core sequence. Involved in development and floral organogenesis. Required for ovule differentiation, pollen production, filament elongation, seed formation and siliques elongation. Also seems to play a role in the formation of trichomes on sepals. May positively modulate gibberellin (GA) signaling in flower. This Arabidopsis thaliana (Mouse-ear cress) protein is Squamosa promoter-binding-like protein 8 (SPL8).